Reading from the N-terminus, the 153-residue chain is Ribosome maturation factor RimP (153 aa).

Belongs to the RimP family.

The protein localises to the cytoplasm. Required for maturation of 30S ribosomal subunits. In Histophilus somni (strain 2336) (Haemophilus somnus), this protein is Ribosome maturation factor RimP.